The sequence spans 486 residues: UDP-N-acetylmuramate--L-alanine ligase (486 aa).

ATP is bound at residue 129–135 (GTHGKTT).

This sequence belongs to the MurCDEF family.

The protein resides in the cytoplasm. The enzyme catalyses UDP-N-acetyl-alpha-D-muramate + L-alanine + ATP = UDP-N-acetyl-alpha-D-muramoyl-L-alanine + ADP + phosphate + H(+). Its pathway is cell wall biogenesis; peptidoglycan biosynthesis. In terms of biological role, cell wall formation. This chain is UDP-N-acetylmuramate--L-alanine ligase, found in Vibrio vulnificus (strain YJ016).